Consider the following 131-residue polypeptide: Profilin (131 aa).

This sequence belongs to the profilin family. In terms of assembly, occurs in many kinds of cells as a complex with monomeric actin in a 1:1 ratio.

The protein localises to the cytoplasm. The protein resides in the cytoskeleton. Its function is as follows. Binds to actin and affects the structure of the cytoskeleton. At high concentrations, profilin prevents the polymerization of actin, whereas it enhances it at low concentrations. By binding to PIP2, it inhibits the formation of IP3 and DG. The protein is Profilin of Fragaria ananassa (Strawberry).